The following is a 124-amino-acid chain: uncharacterized protein (124 aa).

This is an uncharacterized protein from Acanthamoeba polyphaga (Amoeba).